Reading from the N-terminus, the 309-residue chain is D-alanine--D-alanine ligase (309 aa).

Residues 104 to 301 (KQIWQGSDLP…FDALCVEILA (198 aa)) enclose the ATP-grasp domain. 130–185 (VASLGLPVIIKPVHEGSSIGMSKVEKIEDFAPAIEKATAHDAIVMAEKWITGREYT) is a binding site for ATP. Residues Asp255, Glu268, and Asn270 each coordinate Mg(2+).

This sequence belongs to the D-alanine--D-alanine ligase family. The cofactor is Mg(2+). Mn(2+) serves as cofactor.

The protein resides in the cytoplasm. It carries out the reaction 2 D-alanine + ATP = D-alanyl-D-alanine + ADP + phosphate + H(+). It participates in cell wall biogenesis; peptidoglycan biosynthesis. Its function is as follows. Cell wall formation. The sequence is that of D-alanine--D-alanine ligase from Acinetobacter baylyi (strain ATCC 33305 / BD413 / ADP1).